Consider the following 203-residue polypeptide: Putative 3-methyladenine DNA glycosylase (203 aa).

It belongs to the DNA glycosylase MPG family.

The chain is Putative 3-methyladenine DNA glycosylase from Clostridium beijerinckii (strain ATCC 51743 / NCIMB 8052) (Clostridium acetobutylicum).